The chain runs to 810 residues: Glycerol-3-phosphate acyltransferase (810 aa).

The HXXXXD motif motif lies at 305–310 (CHRSHI).

The protein belongs to the GPAT/DAPAT family.

Its subcellular location is the cell inner membrane. The enzyme catalyses sn-glycerol 3-phosphate + an acyl-CoA = a 1-acyl-sn-glycero-3-phosphate + CoA. It functions in the pathway phospholipid metabolism; CDP-diacylglycerol biosynthesis; CDP-diacylglycerol from sn-glycerol 3-phosphate: step 1/3. This chain is Glycerol-3-phosphate acyltransferase, found in Haemophilus influenzae (strain 86-028NP).